Reading from the N-terminus, the 432-residue chain is Proline--tRNA ligase (432 aa).

This sequence belongs to the class-II aminoacyl-tRNA synthetase family. ProS type 2 subfamily. As to quaternary structure, homodimer.

It localises to the cytoplasm. The catalysed reaction is tRNA(Pro) + L-proline + ATP = L-prolyl-tRNA(Pro) + AMP + diphosphate. In terms of biological role, catalyzes the attachment of proline to tRNA(Pro) in a two-step reaction: proline is first activated by ATP to form Pro-AMP and then transferred to the acceptor end of tRNA(Pro). This chain is Proline--tRNA ligase, found in Rickettsia bellii (strain OSU 85-389).